A 232-amino-acid polypeptide reads, in one-letter code: Fibrillarin-like rRNA/tRNA 2'-O-methyltransferase (232 aa).

S-adenosyl-L-methionine is bound by residues 89 to 90 (TT), 108 to 109 (EF), 133 to 134 (DA), and 153 to 156 (DIAQ).

The protein belongs to the methyltransferase superfamily. Fibrillarin family. As to quaternary structure, interacts with nop5. Component of box C/D small ribonucleoprotein (sRNP) particles that contain rpl7ae, FlpA and nop5, plus a guide RNA. These sRNP particles form homodimers, giving rise to an asymmetric holoenzyme.

Functionally, involved in pre-rRNA and tRNA processing. Utilizes the methyl donor S-adenosyl-L-methionine to catalyze the site-specific 2'-hydroxyl methylation of ribose moieties in rRNA and tRNA. Site specificity is provided by a guide RNA that base pairs with the substrate. Methylation occurs at a characteristic distance from the sequence involved in base pairing with the guide RNA. The chain is Fibrillarin-like rRNA/tRNA 2'-O-methyltransferase from Saccharolobus solfataricus (strain ATCC 35092 / DSM 1617 / JCM 11322 / P2) (Sulfolobus solfataricus).